We begin with the raw amino-acid sequence, 561 residues long: Potassium-transporting ATPase potassium-binding subunit (561 aa).

12 consecutive transmembrane segments (helical) span residues 1–21 (MMASASLLIGSYLLLLMLLAR), 62–82 (YLLAILLFNAAGLLLLLLILM), 132–152 (GLTVQNFLSAATGIAVAFALM), 173–193 (ITLYVLLPLSLLMALFLVSQG), 253–273 (FVQMLAIFLIPAALCFAFGDV), 283–303 (LLWSMSLMFVAAVVVVMWAEV), 327–347 (FGILNSSLFAVITTAASCGAV), 356–376 (ALGGMVPMWLMQIGEVVFGGV), 379–399 (GLYGMLLFVLLAVFIAGLMIG), 416–436 (MTALAILVTPVLVLLGAALAM), 483–503 (MLLAFCMLVGRFGIIVPVLAI), and 526–546 (LFIALLIGTVMLVGALTFIPA).

This sequence belongs to the KdpA family. In terms of assembly, the system is composed of three essential subunits: KdpA, KdpB and KdpC.

It localises to the cell inner membrane. In terms of biological role, part of the high-affinity ATP-driven potassium transport (or Kdp) system, which catalyzes the hydrolysis of ATP coupled with the electrogenic transport of potassium into the cytoplasm. This subunit binds the periplasmic potassium ions and delivers the ions to the membrane domain of KdpB through an intramembrane tunnel. This is Potassium-transporting ATPase potassium-binding subunit from Erwinia tasmaniensis (strain DSM 17950 / CFBP 7177 / CIP 109463 / NCPPB 4357 / Et1/99).